A 280-amino-acid chain; its full sequence is DegV domain-containing protein SPy_1698/M5005_Spy1391 (280 aa).

The 278-residue stretch at 3-280 (WKIVTDSGCD…DGGLLMGYEI (278 aa)) folds into the DegV domain. 2 residues coordinate hexadecanoate: S63 and S91.

Its function is as follows. May bind long-chain fatty acids, such as palmitate, and may play a role in lipid transport or fatty acid metabolism. The protein is DegV domain-containing protein SPy_1698/M5005_Spy1391 of Streptococcus pyogenes serotype M1.